The sequence spans 122 residues: Large ribosomal subunit protein uL14 (122 aa).

Belongs to the universal ribosomal protein uL14 family. Part of the 50S ribosomal subunit. Forms a cluster with proteins L3 and L19. In the 70S ribosome, L14 and L19 interact and together make contacts with the 16S rRNA in bridges B5 and B8.

In terms of biological role, binds to 23S rRNA. Forms part of two intersubunit bridges in the 70S ribosome. The polypeptide is Large ribosomal subunit protein uL14 (Campylobacter fetus subsp. fetus (strain 82-40)).